We begin with the raw amino-acid sequence, 245 residues long: Probable phosphatase Ent638_1550 (245 aa).

H7, H9, H15, H40, E73, H101, H131, D192, and H194 together coordinate Zn(2+).

The protein belongs to the PHP family. In terms of assembly, homotrimer. Requires Zn(2+) as cofactor.

This Enterobacter sp. (strain 638) protein is Probable phosphatase Ent638_1550.